A 389-amino-acid polypeptide reads, in one-letter code: Glutamate 5-kinase (389 aa).

Lysine 16 is a binding site for ATP. Substrate is bound by residues serine 56, aspartate 143, and asparagine 155. 175 to 176 provides a ligand contact to ATP; sequence SD. A PUA domain is found at 281–358; the sequence is AGELHVDDGA…AEIEAILGYA (78 aa).

It belongs to the glutamate 5-kinase family.

The protein localises to the cytoplasm. It carries out the reaction L-glutamate + ATP = L-glutamyl 5-phosphate + ADP. The protein operates within amino-acid biosynthesis; L-proline biosynthesis; L-glutamate 5-semialdehyde from L-glutamate: step 1/2. Its function is as follows. Catalyzes the transfer of a phosphate group to glutamate to form L-glutamate 5-phosphate. The polypeptide is Glutamate 5-kinase (Rhizobium etli (strain CIAT 652)).